The chain runs to 281 residues: Large ribosomal subunit protein mL46 (281 aa).

The transit peptide at 1 to 19 (MKVNLMLKRGLATATATAS) directs the protein to the mitochondrion. Over residues 106–118 (RERSTKQEVKLSD) the composition is skewed to basic and acidic residues. Residues 106–141 (RERSTKQEVKLSDDSTVAFSNNQKEQSKDDVNRPVI) are disordered. The span at 119–129 (DSTVAFSNNQK) shows a compositional bias: polar residues.

The protein belongs to the mitochondrion-specific ribosomal protein mL46 family. Component of the mitochondrial large ribosomal subunit (mt-LSU). Mature yeast 74S mitochondrial ribosomes consist of a small (37S) and a large (54S) subunit. The 37S small subunit contains a 15S ribosomal RNA (15S mt-rRNA) and 34 different proteins. The 54S large subunit contains a 21S rRNA (21S mt-rRNA) and 46 different proteins.

It is found in the mitochondrion. Component of the mitochondrial ribosome (mitoribosome), a dedicated translation machinery responsible for the synthesis of mitochondrial genome-encoded proteins, including at least some of the essential transmembrane subunits of the mitochondrial respiratory chain. The mitoribosomes are attached to the mitochondrial inner membrane and translation products are cotranslationally integrated into the membrane. This chain is Large ribosomal subunit protein mL46 (MRPL17), found in Saccharomyces cerevisiae (strain ATCC 204508 / S288c) (Baker's yeast).